We begin with the raw amino-acid sequence, 132 residues long: Small ribosomal subunit protein uS8 (132 aa).

This sequence belongs to the universal ribosomal protein uS8 family. As to quaternary structure, part of the 30S ribosomal subunit. Contacts proteins S5 and S12.

In terms of biological role, one of the primary rRNA binding proteins, it binds directly to 16S rRNA central domain where it helps coordinate assembly of the platform of the 30S subunit. The chain is Small ribosomal subunit protein uS8 from Borrelia duttonii (strain Ly).